Consider the following 239-residue polypeptide: Geranylgeranylglyceryl phosphate synthase (239 aa).

Positions 18 and 45 each coordinate Mg(2+). Residues 166–172 (YLEAGSG), 197–198 (GG), and 219–220 (GT) each bind sn-glycerol 1-phosphate.

Belongs to the GGGP/HepGP synthase family. Group II subfamily. The cofactor is Mg(2+).

Its subcellular location is the cytoplasm. The catalysed reaction is sn-glycerol 1-phosphate + (2E,6E,10E)-geranylgeranyl diphosphate = sn-3-O-(geranylgeranyl)glycerol 1-phosphate + diphosphate. The protein operates within membrane lipid metabolism; glycerophospholipid metabolism. In terms of biological role, prenyltransferase that catalyzes the transfer of the geranylgeranyl moiety of geranylgeranyl diphosphate (GGPP) to the C3 hydroxyl of sn-glycerol-1-phosphate (G1P). This reaction is the first ether-bond-formation step in the biosynthesis of archaeal membrane lipids. The sequence is that of Geranylgeranylglyceryl phosphate synthase from Pyrobaculum aerophilum (strain ATCC 51768 / DSM 7523 / JCM 9630 / CIP 104966 / NBRC 100827 / IM2).